We begin with the raw amino-acid sequence, 149 residues long: Large ribosomal subunit protein bL9 (149 aa).

It belongs to the bacterial ribosomal protein bL9 family.

Functionally, binds to the 23S rRNA. This chain is Large ribosomal subunit protein bL9, found in Chromobacterium violaceum (strain ATCC 12472 / DSM 30191 / JCM 1249 / CCUG 213 / NBRC 12614 / NCIMB 9131 / NCTC 9757 / MK).